The following is a 265-amino-acid chain: Glutamate racemase (265 aa).

Residues 12–13 (DS) and 44–45 (YG) contribute to the substrate site. Cys75 acts as the Proton donor/acceptor in catalysis. 76–77 (NT) is a substrate binding site. Residue Cys183 is the Proton donor/acceptor of the active site. 184-185 (TH) lines the substrate pocket.

The protein belongs to the aspartate/glutamate racemases family.

The enzyme catalyses L-glutamate = D-glutamate. It functions in the pathway cell wall biogenesis; peptidoglycan biosynthesis. Provides the (R)-glutamate required for cell wall biosynthesis. The sequence is that of Glutamate racemase from Carboxydothermus hydrogenoformans (strain ATCC BAA-161 / DSM 6008 / Z-2901).